The primary structure comprises 295 residues: tRNA-cytidine(32) 2-sulfurtransferase (295 aa).

The short motif at 63-68 is the PP-loop motif element; that stretch reads SGGKDS. Residues cysteine 138, cysteine 141, and cysteine 229 each contribute to the [4Fe-4S] cluster site.

The protein belongs to the TtcA family. As to quaternary structure, homodimer. It depends on Mg(2+) as a cofactor. Requires [4Fe-4S] cluster as cofactor.

The protein resides in the cytoplasm. It carries out the reaction cytidine(32) in tRNA + S-sulfanyl-L-cysteinyl-[cysteine desulfurase] + AH2 + ATP = 2-thiocytidine(32) in tRNA + L-cysteinyl-[cysteine desulfurase] + A + AMP + diphosphate + H(+). It functions in the pathway tRNA modification. Catalyzes the ATP-dependent 2-thiolation of cytidine in position 32 of tRNA, to form 2-thiocytidine (s(2)C32). The sulfur atoms are provided by the cysteine/cysteine desulfurase (IscS) system. In Mesorhizobium japonicum (strain LMG 29417 / CECT 9101 / MAFF 303099) (Mesorhizobium loti (strain MAFF 303099)), this protein is tRNA-cytidine(32) 2-sulfurtransferase.